The following is a 216-amino-acid chain: Cytidylate kinase (216 aa).

ATP is bound at residue 11–19 (GPAGAGKGT).

Belongs to the cytidylate kinase family. Type 1 subfamily.

The protein resides in the cytoplasm. The catalysed reaction is CMP + ATP = CDP + ADP. It catalyses the reaction dCMP + ATP = dCDP + ADP. The chain is Cytidylate kinase from Mesorhizobium japonicum (strain LMG 29417 / CECT 9101 / MAFF 303099) (Mesorhizobium loti (strain MAFF 303099)).